Consider the following 3095-residue polypeptide: Centrosome-associated protein 350 (3095 aa).

Disordered regions lie at residues 1-24 (MRSS…ETIQ) and 63-105 (TKKS…RSPL). Polar residues predominate over residues 14–24 (PRNSQSKETIQ). A phosphoserine mark is found at Ser-84 and Ser-140. Disordered stretches follow at residues 219 to 239 (DEMP…LNNM), 251 to 272 (SDSS…KRQQ), and 430 to 493 (KILG…RAWS). Positions 228–238 (SENNSKPSLNN) are enriched in polar residues. The segment covering 251-265 (SDSSPSSSACNSQRS) has biased composition (low complexity). Basic and acidic residues-rich tracts occupy residues 438-457 (MEQK…ERVA) and 464-476 (GRAE…DVSH). The residue at position 468 (Ser-468) is a Phosphoserine. Positions 481 to 491 (RSSARSRSSRA) are enriched in low complexity. Ser-503 carries the phosphoserine modification. Disordered regions lie at residues 538–623 (QAVR…QKNK) and 671–718 (ARQH…PPQP). 2 stretches are compositionally biased toward basic and acidic residues: residues 587–623 (YDTD…QKNK) and 690–699 (ESDKENKIQE). Residues 596–641 (IVRQQEERRRRQHEEKKAQKEATEQKNKRLQELYRRQREAFSKAKT) are a coiled coil. At Ser-691 the chain carries Phosphoserine. Over residues 701–714 (PPSASSSSDLSLSE) the composition is skewed to low complexity. Residues Ser-874 and Ser-935 each carry the phosphoserine modification. Positions 977–996 (SVSEGPLLSEGSLSEEEERR) are disordered. The span at 979–988 (SEGPLLSEGS) shows a compositional bias: low complexity. Position 1057 is a phosphoserine (Ser-1057). 2 disordered regions span residues 1099–1128 (YEDD…GSSL) and 1151–1265 (QHSS…SQKL). Residues 1119–1128 (LESQVDGSSL) show a composition bias toward polar residues. The segment covering 1153-1168 (SSGARSAGSTRSSSAS) has biased composition (low complexity). Over residues 1194 to 1206 (DEEKVQSDSERGS) the composition is skewed to basic and acidic residues. Ser-1200 is subject to Phosphoserine. Over residues 1251–1265 (QKTPTSPLSPSSQKL) the composition is skewed to low complexity. Thr-1253 is modified (phosphothreonine). 2 positions are modified to phosphoserine: Ser-1256 and Ser-1259. Positions 1363-1402 (IKAQQQRHERDLALLKLKAEQEALECQRQLEETRNKTAQV) form a coiled coil. 4 disordered regions span residues 1490–1668 (AETD…GQDS), 1720–1739 (LRDK…QRGL), 1787–1864 (KLKS…QRRQ), and 1893–2017 (AWDK…PVKS). A compositionally biased stretch (basic and acidic residues) spans 1503 to 1513 (QSKEGAVDSKR). 2 stretches are compositionally biased toward low complexity: residues 1517–1526 (SPSRDSYSES) and 1536–1545 (SSGSSRQDSP). Residues 1551-1564 (KENEKPFHGEKMES) are compositionally biased toward basic and acidic residues. The residue at position 1606 (Ser-1606) is a Phosphoserine. Positions 1624–1640 (ESHRRFNMEKKRGHHDD) are enriched in basic and acidic residues. Residues Ser-1641 and Ser-1646 each carry the phosphoserine modification. The stretch at 1700–1793 (KALKEKTKAE…LQEKLKSAGE (94 aa)) forms a coiled coil. The span at 1787–1796 (KLKSAGEKKL) shows a compositional bias: basic and acidic residues. Phosphoserine is present on Ser-1812. Positions 1819-1835 (ETRSPSPISISSSETSS) are enriched in low complexity. 2 stretches are compositionally biased toward basic and acidic residues: residues 1845–1864 (SRMD…QRRQ) and 1894–1915 (WDKE…RTEQ). Residues 1850–1893 (KFLTKREQKLMQRRQHAEELLEWKRRLDAEEAEIQQMEKQALAA) adopt a coiled-coil conformation. Ser-1930 is modified (phosphoserine). The segment covering 1980–1994 (STSPSKHSPPKSCLS) has biased composition (low complexity). A compositionally biased stretch (basic and acidic residues) spans 1999–2011 (ESSKASHRTEGHC). Residues 2043-2092 (IEGRIRALKDELRKRKSVVEQLKREQRKRQKERLKAQEASLLRQLETYDE) are a coiled coil. Residue Ser-2108 is modified to Phosphoserine. Disordered regions lie at residues 2116 to 2155 (KTLS…GSLA), 2191 to 2265 (IEHL…VEDA), 2286 to 2427 (LSSK…EISE), and 2440 to 2471 (VHSE…GGTE). Residues 2133 to 2151 (HRSETAKTWKSVTESERSR) are compositionally biased toward basic and acidic residues. Ser-2198 bears the Phosphoserine mark. 2 stretches are compositionally biased toward basic and acidic residues: residues 2202–2214 (SSRK…RDSL) and 2227–2259 (NAPD…KLES). The segment covering 2286 to 2300 (LSSKELPSDSANVQQ) has biased composition (polar residues). Positions 2301–2331 (DLDKPATETSHEKEEALKEDQSNHSTDDRSP) are enriched in basic and acidic residues. The span at 2349–2362 (DSTCSGQLSVPKES) shows a compositional bias: polar residues. Basic and acidic residues-rich tracts occupy residues 2377-2387 (ISADEISKDDS) and 2395-2407 (LRKD…DRSQ). The segment covering 2409-2420 (TRSSRSRATGSG) has biased composition (low complexity). Phosphoserine is present on residues Ser-2421 and Ser-2450. The segment covering 2455–2465 (MKSKERSDVGH) has biased composition (basic and acidic residues). The 43-residue stretch at 2504-2546 (GETDFAKGFWAGVELDKPEGNNNGTYDGIVYFVCKDKHGIFAP) folds into the CAP-Gly domain. Residue Thr-2671 is modified to Phosphothreonine. Positions 2700-2731 (LLDLLTREKNQLEAQLKSSISEEKKSKQQLET) form a coiled coil. The interval 2767 to 2793 (QEFLDQKKVPPQDLPQNTEEQSPSVPS) is disordered. The segment covering 2780 to 2791 (LPQNTEEQSPSV) has biased composition (polar residues). Ser-2809 and Ser-2818 each carry phosphoserine.

Part of a ternary complex that contains CEP350, CEP43 and MAPRE1. Interacts (via C-terminus) directly with CEP43 (via N-terminus). Interacts with NR1H3, PPARA, PPARD and PPARG. Interacts directly with microtubules. Interacts with the fusion protein CEP43-FGFR1, and by doing so recruits and activates PI3K and PLC-gamma. Interacts with CYLD. Interacts with CFAP157. Interacts with CEP19 (via C-terminus). Interacts with CEP78; promoting CEP78 localization to centrosome and centriole. Phosphorylated during mitosis.

It is found in the cytoplasm. The protein resides in the cytoskeleton. Its subcellular location is the microtubule organizing center. The protein localises to the centrosome. It localises to the spindle. It is found in the nucleus. The protein resides in the centriole. Its subcellular location is the cilium basal body. In terms of biological role, plays an essential role in centriole growth by stabilizing a procentriolar seed composed of at least, SASS6 and CPAP. Required for anchoring microtubules to the centrosomes and for the integrity of the microtubule network. Recruits PPARA to discrete subcellular compartments and thereby modulates PPARA activity. Required for ciliation. This Mus musculus (Mouse) protein is Centrosome-associated protein 350.